A 108-amino-acid chain; its full sequence is uncharacterized protein (108 aa).

The interval 56 to 108 (ELPSRGCLPAPRPESGQGRLSTGISQNGGRSSAQPCPRCIAGESGHFSHTKNH) is disordered. A compositionally biased stretch (polar residues) spans 73 to 89 (GRLSTGISQNGGRSSAQ).

This is an uncharacterized protein from Homo sapiens (Human).